A 304-amino-acid chain; its full sequence is Protein Largen (304 aa).

Positions 1–13 (MSAKSKGNPSSSC) are enriched in polar residues. Disordered stretches follow at residues 1-27 (MSAKSKGNPSSSCPAEGPPAASKTKVK), 66-91 (QLEDEMTDSSKTDTLNSSSSGTTASS), 114-160 (LTVL…GGLP), and 239-304 (HPPG…TTTV). Residues 33 to 70 (IVEDLELVLGDLKDVAKELKEVVDQIDTLTSDLQLEDE) adopt a coiled-coil conformation. The segment covering 77–91 (TDTLNSSSSGTTASS) has biased composition (low complexity). 3 stretches are compositionally biased toward pro residues: residues 120 to 129 (PNPPPPPPRL), 239 to 261 (HPPGKIPHQGPPLPPTPHLPPFP), and 277 to 289 (PIRPATVPPPTAP).

Its function is as follows. Regulator of cell size that promotes cell size increase independently of mTOR and Hippo signaling pathways. Acts by stimulating the translation of specific mRNAs, including those encoding proteins affecting mitochondrial functions. Increases mitochondrial mass and respiration. The protein is Protein Largen (PRR16) of Homo sapiens (Human).